The primary structure comprises 263 residues: Homeobox protein CDX-1 (263 aa).

The segment at 47–108 (PGINSDPHHG…VQPPGSGLLP (62 aa)) is disordered. Over residues 82-97 (SSANPTQIAFSPSDYN) the composition is skewed to polar residues. Positions 150–209 (KDKYRVVYTDHQRLELEKEFHYSRYITIRRKAELAAALGLTERQVKIWFQNRRAKERKVN) form a DNA-binding region, homeobox. The tract at residues 153 to 174 (YRVVYTDHQRLELEKEFHYSRY) is interaction with DNA. The tract at residues 192–203 (RQVKIWFQNRRA) is interaction with 5-mCpG DNA. Positions 204 to 213 (KERKVNKKKM) are enriched in basic residues. A disordered region spans residues 204-263 (KERKVNKKKMQQQSQQASTTTPTPPSVGTTAGMGGLCSSSSSNSNLVSPSSMPIKEEYLS). Low complexity-rich tracts occupy residues 214–233 (QQQS…VGTT) and 241–254 (SSSS…SPSS).

Belongs to the Caudal homeobox family.

Its subcellular location is the nucleus. In terms of biological role, plays a role in transcriptional regulation. Involved in activated KRAS-mediated transcriptional activation of PRKD1. Binds to the PRKD1 promoter. Could play a role in the terminal differentiation of the intestine. Binds preferentially to methylated DNA. This is Homeobox protein CDX-1 (cdx1) from Xenopus laevis (African clawed frog).